Reading from the N-terminus, the 285-residue chain is Elongation factor Ts (285 aa).

Positions 75–78 (TDFV) are involved in Mg(2+) ion dislocation from EF-Tu.

This sequence belongs to the EF-Ts family.

The protein resides in the cytoplasm. In terms of biological role, associates with the EF-Tu.GDP complex and induces the exchange of GDP to GTP. It remains bound to the aminoacyl-tRNA.EF-Tu.GTP complex up to the GTP hydrolysis stage on the ribosome. This Alcanivorax borkumensis (strain ATCC 700651 / DSM 11573 / NCIMB 13689 / SK2) protein is Elongation factor Ts.